The sequence spans 469 residues: Transcription factor SOX-10 (469 aa).

Disordered regions lie at residues 1 to 70 (MAEE…DDDK), 163 to 203 (LRMQ…QGGA), 215 to 278 (LDHR…DFGN), 357 to 378 (AQVK…QPST), and 436 to 469 (RPLY…LSRP). Over residues 23 to 32 (LSPGSAPSLG) the composition is skewed to low complexity. Ser24 carries the post-translational modification Phosphoserine. Positions 33-44 (PDGGGGGGGGSG) are enriched in gly residues. The dimerization (DIM) stretch occupies residues 65 to 105 (EADDDKFPVCIREAVSQVLSGYDWTLVPMPVRVNGASKSKP). Positions 107-175 (VKRPMNAFMV…QHKKDHPDYK (69 aa)) form a DNA-binding region, HMG box. Basic and acidic residues-rich tracts occupy residues 163-176 (LRMQ…DYKY) and 257-274 (ADPK…KPHI). The interval 231–313 (PEHPSGQSHG…LPPNGHPGHV (83 aa)) is transactivation domain (TAM). The segment at 356–469 (KAQVKTETAG…QPVYTTLSRP (114 aa)) is transactivation domain (TAC). Polar residues predominate over residues 443-469 (SDPSPSGPQSHSPTHWEQPVYTTLSRP).

As to quaternary structure, monomer. Interacts with ARMCX3 at the mitochondrial outer membrane surface. Interacts with PAX3.

The protein resides in the cytoplasm. Its subcellular location is the nucleus. The protein localises to the mitochondrion outer membrane. In terms of biological role, transcription factor that plays a central role in developing and mature glia. Specifically activates expression of myelin genes, during oligodendrocyte (OL) maturation, such as DUSP15 and MYRF, thereby playing a central role in oligodendrocyte maturation and CNS myelination. Once induced, MYRF cooperates with SOX10 to implement the myelination program. Transcriptional activator of MITF, acting synergistically with PAX3. Transcriptional activator of MBP, via binding to the gene promoter. The chain is Transcription factor SOX-10 (SOX10) from Sus scrofa (Pig).